Consider the following 571-residue polypeptide: MVGEYVRLTPAGKGRLKGLCPFHKEKTPSFQVDTEKGYYHCFGCKASGDVFGFVQQMEHLSFGDALRKLADRAGIQIDAKYGEKVSRDLYEVNAFALDYFRSHLPGPALDYLRGRGLSDETIAAFELGYAPDGWDGLLKLARTKGVSEKQLLEAGLLTENPENGRVYDRFRGRVMFPIRDHLGRLVGFGGRVLDDSKPKYLNTPETAAFKKGELLYGLDKARSGLGGGAELVVVEGYMDVISMHQHGFTGAVASLGTALTAEHAQLLERLGAQSIVLMFDQDGAGLKATLAGLDQVIGAKFRVRATSVPSGKDPADALLAGDDAGIREALAGGLDEVKYRVQAATEKYGVDTNEGKRRVLMELLPRMQNLDPLDAIAQDMRGAACELLGIRPEALLDWITSKAKRRTLTDTHLAGMSQSSGEEEHELALLRQLLVDPSLLAKLDGSLPWRNEAVRKVMLAAQGARSPDDILDIFRGQPEEQLLIRLMFEGRDSGSLSRASSQEYEQKVTTYAAHAVDDIQVTLNIDALKTEVDLLKKQLLSTPPAEQLALLSQIQELQRAIEAEKRARRGS.

The CHC2-type zinc finger occupies 20 to 44; it reads CPFHKEKTPSFQVDTEKGYYHCFGC. One can recognise a Toprim domain in the interval 229-309; it reads AELVVVEGYM…KFRVRATSVP (81 aa). The Mg(2+) site is built by Glu235, Asp280, and Asp282.

This sequence belongs to the DnaG primase family. As to quaternary structure, monomer. Interacts with DnaB. It depends on Zn(2+) as a cofactor. Mg(2+) is required as a cofactor.

It catalyses the reaction ssDNA + n NTP = ssDNA/pppN(pN)n-1 hybrid + (n-1) diphosphate.. RNA polymerase that catalyzes the synthesis of short RNA molecules used as primers for DNA polymerase during DNA replication. The sequence is that of DNA primase from Deinococcus radiodurans (strain ATCC 13939 / DSM 20539 / JCM 16871 / CCUG 27074 / LMG 4051 / NBRC 15346 / NCIMB 9279 / VKM B-1422 / R1).